Reading from the N-terminus, the 408-residue chain is Arginine biosynthesis bifunctional protein ArgJ (408 aa).

Substrate is bound by residues T162, K188, T199, E280, N403, and S408. T199 functions as the Nucleophile in the catalytic mechanism.

The protein belongs to the ArgJ family. As to quaternary structure, heterotetramer of two alpha and two beta chains.

The protein localises to the cytoplasm. The catalysed reaction is N(2)-acetyl-L-ornithine + L-glutamate = N-acetyl-L-glutamate + L-ornithine. It catalyses the reaction L-glutamate + acetyl-CoA = N-acetyl-L-glutamate + CoA + H(+). It participates in amino-acid biosynthesis; L-arginine biosynthesis; L-ornithine and N-acetyl-L-glutamate from L-glutamate and N(2)-acetyl-L-ornithine (cyclic): step 1/1. It functions in the pathway amino-acid biosynthesis; L-arginine biosynthesis; N(2)-acetyl-L-ornithine from L-glutamate: step 1/4. In terms of biological role, catalyzes two activities which are involved in the cyclic version of arginine biosynthesis: the synthesis of N-acetylglutamate from glutamate and acetyl-CoA as the acetyl donor, and of ornithine by transacetylation between N(2)-acetylornithine and glutamate. This chain is Arginine biosynthesis bifunctional protein ArgJ, found in Ruegeria pomeroyi (strain ATCC 700808 / DSM 15171 / DSS-3) (Silicibacter pomeroyi).